Here is a 341-residue protein sequence, read N- to C-terminus: Ribosomal RNA small subunit methyltransferase C (341 aa).

Belongs to the methyltransferase superfamily. RsmC family. As to quaternary structure, monomer.

It is found in the cytoplasm. The enzyme catalyses guanosine(1207) in 16S rRNA + S-adenosyl-L-methionine = N(2)-methylguanosine(1207) in 16S rRNA + S-adenosyl-L-homocysteine + H(+). Its function is as follows. Specifically methylates the guanine in position 1207 of 16S rRNA in the 30S particle. The protein is Ribosomal RNA small subunit methyltransferase C of Pseudoalteromonas translucida (strain TAC 125).